The chain runs to 495 residues: Homeobox protein ceh-21 (495 aa).

Positions 1-14 (MSQQFQASSGTGSA) are enriched in polar residues. Disordered regions lie at residues 1 to 24 (MSQQ…TEHE) and 89 to 267 (TAES…PGGE). Residues 106 to 120 (LEEKSDKSSDGDGTS) are compositionally biased toward basic and acidic residues. Acidic residues predominate over residues 132–145 (NETEEDHEEKEDEA). The span at 149–162 (SRRESTRLKRKLLE) shows a compositional bias: basic and acidic residues. Composition is skewed to polar residues over residues 163-179 (SQKT…ASSK) and 199-217 (TPEQ…TVRA). The span at 218-233 (SSTCGSSVSSTSTVSS) shows a compositional bias: low complexity. Over residues 242–254 (RATETPKLEELAP) the composition is skewed to basic and acidic residues. The segment at residues 284-370 (NAQIGDDEEL…VRRALCFLPK (87 aa)) is a DNA-binding region (CUT). The homeobox DNA-binding region spans 389 to 449 (KTVKVIRLTF…MNSRRRLRID (61 aa)). The interval 450–473 (QQISRSSRSTGNGADTEDELDEED) is disordered. Acidic residues predominate over residues 464 to 473 (DTEDELDEED).

Belongs to the CUT homeobox family.

It is found in the nucleus. Probable DNA-binding regulatory protein involved in cell-fate specification. The polypeptide is Homeobox protein ceh-21 (ceh-21) (Caenorhabditis elegans).